Reading from the N-terminus, the 613-residue chain is Leucine-rich repeat and immunoglobulin-like domain-containing nogo receptor-interacting protein 1 (613 aa).

A signal peptide spans 1–34 (MLAGEASMRSPILACWQPILLLMLGSILSGSATG). Intrachain disulfides connect cysteine 35-cysteine 41 and cysteine 39-cysteine 50. An LRRNT domain is found at 35–64 (CPPRCECSAQERAVLCHRKRFMVVPEGIPT). The Extracellular segment spans residues 35–554 (CPPRCECSAQ…FDIKTLIIAT (520 aa)). 11 LRR repeats span residues 65 to 86 (ETRQ…EFAN), 89 to 110 (HLEE…AFNN), 113 to 134 (NLRT…VFTG), 137 to 158 (NLTK…MFQD), 161 to 182 (NLKS…AFSG), 185 to 206 (SLEQ…ALSH), 209 to 230 (GLIV…SFKR), 257 to 278 (NLTS…SVRH), 281 to 302 (YLRF…MLHD), 305 to 326 (RLQE…AFRG), and 329 to 350 (YLRI…AFHS). A glycan (N-linked (GlcNAc...) asparagine) is linked at asparagine 137. Asparagine 195 carries N-linked (GlcNAc...) asparagine glycosylation. N-linked (GlcNAc...) asparagine glycans are attached at residues asparagine 257, asparagine 267, and asparagine 286. N-linked (GlcNAc...) asparagine glycosylation is present at asparagine 334. Residues 362 to 416 (NPLACDCRLLWVFRRRWRLNFNKQQPTCSTPEFVQGKEFKDFPDVLLPNYFTCRR) enclose the LRRCT domain. Intrachain disulfides connect cysteine 366/cysteine 389, cysteine 368/cysteine 414, and cysteine 439/cysteine 490. An Ig-like C2-type domain is found at 404-508 (PDVLLPNYFT…DTMLAHLHVR (105 aa)). 5 N-linked (GlcNAc...) asparagine glycosylation sites follow: asparagine 485, asparagine 498, asparagine 519, asparagine 530, and asparagine 535. The helical transmembrane segment at 555–575 (TMGFISFLGVVLFCLVLLFLW) threads the bilayer. The Cytoplasmic portion of the chain corresponds to 576-613 (SRGKGNTKHNIEIEYVPRKSDAGISSADAPRKFNMKMI).

Homotetramer. Forms ternary complex with RTN4R/NGFR and RTN4R/TNFRSF19. Post-translationally, N-glycosylated. Contains predominantly high-mannose glycans.

It is found in the cell membrane. Its function is as follows. Functional component of the Nogo receptor signaling complex (RTN4R/NGFR) in RhoA activation responsible for some inhibition of axonal regeneration by myelin-associated factors. Is also an important negative regulator of oligodentrocyte differentiation and axonal myelination. The polypeptide is Leucine-rich repeat and immunoglobulin-like domain-containing nogo receptor-interacting protein 1 (LINGO1) (Gallus gallus (Chicken)).